The following is a 126-amino-acid chain: Plastocyanin (126 aa).

An N-terminal signal peptide occupies residues 1–28; sequence MSKKFLTILAGLLLVVSSFFLSVSPAAA. Positions 29 to 126 constitute a Plastocyanin-like domain; it reads ANATVKMGSD…AGMVGKVVVE (98 aa). 4 residues coordinate Cu cation: H67, C111, H114, and M119.

It belongs to the plastocyanin family. Cu(2+) is required as a cofactor.

The protein localises to the cellular thylakoid membrane. Its function is as follows. Participates in electron transfer between P700 and the cytochrome b6-f complex in photosystem I. The protein is Plastocyanin (petE) of Synechocystis sp. (strain ATCC 27184 / PCC 6803 / Kazusa).